Consider the following 910-residue polypeptide: Protein translocase subunit SecA (910 aa).

ATP is bound by residues Gln86, 104–108 (GEGKT), and Asp508. Positions 894, 896, 905, and 906 each coordinate Zn(2+).

Belongs to the SecA family. As to quaternary structure, monomer and homodimer. Part of the essential Sec protein translocation apparatus which comprises SecA, SecYEG and auxiliary proteins SecDF. Other proteins may also be involved. Zn(2+) is required as a cofactor.

It is found in the cell membrane. It localises to the cytoplasm. It catalyses the reaction ATP + H2O + cellular proteinSide 1 = ADP + phosphate + cellular proteinSide 2.. Part of the Sec protein translocase complex. Interacts with the SecYEG preprotein conducting channel. Has a central role in coupling the hydrolysis of ATP to the transfer of proteins into and across the cell membrane, serving as an ATP-driven molecular motor driving the stepwise translocation of polypeptide chains across the membrane. The chain is Protein translocase subunit SecA from Acetivibrio thermocellus (strain ATCC 27405 / DSM 1237 / JCM 9322 / NBRC 103400 / NCIMB 10682 / NRRL B-4536 / VPI 7372) (Clostridium thermocellum).